We begin with the raw amino-acid sequence, 141 residues long: Hemoglobin subunit alpha (141 aa).

The disordered stretch occupies residues 1–22; that stretch reads VLSEDDKNRVRTSVGKNPELPG. The 141-residue stretch at 1–141 folds into the Globin domain; that stretch reads VLSEDDKNRV…VSEVLESKYR (141 aa). Residue His58 participates in O2 binding. Heme b is bound at residue His87.

This sequence belongs to the globin family. In terms of assembly, heterotetramer of two alpha chains and two beta chains. As to expression, red blood cells.

In terms of biological role, involved in oxygen transport from the lung to the various peripheral tissues. The protein is Hemoglobin subunit alpha (HBA) of Vipera aspis (Aspic viper).